Here is a 712-residue protein sequence, read N- to C-terminus: Ribosomal RNA large subunit methyltransferase K/L (712 aa).

One can recognise a THUMP domain in the interval 46–157; that stretch reads GAYQALLHSR…RENMVVSLDL (112 aa).

Belongs to the methyltransferase superfamily. RlmKL family.

The protein localises to the cytoplasm. It carries out the reaction guanosine(2445) in 23S rRNA + S-adenosyl-L-methionine = N(2)-methylguanosine(2445) in 23S rRNA + S-adenosyl-L-homocysteine + H(+). The catalysed reaction is guanosine(2069) in 23S rRNA + S-adenosyl-L-methionine = N(2)-methylguanosine(2069) in 23S rRNA + S-adenosyl-L-homocysteine + H(+). Functionally, specifically methylates the guanine in position 2445 (m2G2445) and the guanine in position 2069 (m7G2069) of 23S rRNA. The sequence is that of Ribosomal RNA large subunit methyltransferase K/L from Actinobacillus pleuropneumoniae serotype 3 (strain JL03).